Here is a 116-residue protein sequence, read N- to C-terminus: Large ribosomal subunit protein bL19 (116 aa).

It belongs to the bacterial ribosomal protein bL19 family.

Functionally, this protein is located at the 30S-50S ribosomal subunit interface and may play a role in the structure and function of the aminoacyl-tRNA binding site. In Pasteurella multocida (strain Pm70), this protein is Large ribosomal subunit protein bL19.